A 250-amino-acid polypeptide reads, in one-letter code: Beta-lactamase HcpA (250 aa).

The N-terminal stretch at 1–25 is a signal peptide; sequence MLGSVKKTLFGVLCLGALCLRGLMA. 5 TPR repeats span residues 29-62, 67-98, 100-133, 134-169, and 170-202; these read AKEL…KEGF, LGAF…NDGY, CRLL…LNHA, EGCT…LKDS, and PGCI…KDGR. Disulfide bonds link Cys56/Cys64, Cys92/Cys100, Cys128/Cys136, Cys164/Cys172, Cys196/Cys204, and Cys232/Cys240.

The protein belongs to the hcp beta-lactamase family.

It localises to the secreted. The catalysed reaction is a beta-lactam + H2O = a substituted beta-amino acid. With respect to regulation, inhibited by cloxacillin and oxacillin but not by ACA derivatives or metal chelators. Functionally, slowly hydrolyzes 6-aminopenicillinic acid and 7-aminocephalosporanic acid (ACA) derivatives. May be involved in the synthesis of the cell wall peptidoglycan. This chain is Beta-lactamase HcpA (hcpA), found in Helicobacter pylori (strain J99 / ATCC 700824) (Campylobacter pylori J99).